The sequence spans 663 residues: Protein-arginine deiminase type-1 (663 aa).

The Ca(2+) site is built by asparagine 153, aspartate 155, aspartate 157, aspartate 165, aspartate 176, aspartate 179, glutamine 351, glutamate 353, lysine 364, aspartate 371, serine 372, asparagine 375, phenylalanine 409, and leucine 412. Cysteine 645 serves as the catalytic Nucleophile.

Belongs to the protein arginine deiminase family. As to quaternary structure, monomer. It depends on Ca(2+) as a cofactor. Detected in epidermal keratinocytes (at protein level). Epidermis, prostate, testis, placenta, spleen and thymus.

Its subcellular location is the cytoplasm. It carries out the reaction L-arginyl-[protein] + H2O = L-citrullyl-[protein] + NH4(+). Catalyzes the deimination of arginine residues of proteins. The protein is Protein-arginine deiminase type-1 (PADI1) of Homo sapiens (Human).